A 123-amino-acid chain; its full sequence is Large ribosomal subunit protein uL18 (123 aa).

The protein belongs to the universal ribosomal protein uL18 family. In terms of assembly, part of the 50S ribosomal subunit; part of the 5S rRNA/L5/L18/L25 subcomplex. Contacts the 5S and 23S rRNAs.

Functionally, this is one of the proteins that bind and probably mediate the attachment of the 5S RNA into the large ribosomal subunit, where it forms part of the central protuberance. This chain is Large ribosomal subunit protein uL18, found in Chlamydia trachomatis serovar L2 (strain ATCC VR-902B / DSM 19102 / 434/Bu).